The primary structure comprises 292 residues: Secreted frizzled-related protein 2 (292 aa).

The first 20 residues, 1-20 (MPRRLCALLLLASQCLGSTA), serve as a signal peptide directing secretion. Residues 32-152 (YKRSNCKPIP…PKDNDLCIPL (121 aa)) enclose the FZ domain. Cystine bridges form between C37/C100, C47/C93, C84/C122, C111/C149, C115/C139, C169/C242, and C187/C292. The NTR domain maps to 169 to 292 (CDACKNKNED…FSRSIRKLQC (124 aa)).

This sequence belongs to the secreted frizzled-related protein (sFRP) family.

The protein localises to the secreted. Functionally, soluble frizzled-related proteins (sFRPS) function as modulators of Wnt signaling through direct interaction with Wnts. They have a role in regulating cell growth and differentiation in specific cell types. SFRP2 appears to be associated with myogenesis. The sequence is that of Secreted frizzled-related protein 2 (SFRP2) from Gallus gallus (Chicken).